A 386-amino-acid chain; its full sequence is Ribonuclease D (386 aa).

The 172-residue stretch at 3 to 174 (HTITTTDELA…EIYEYLSAEL (172 aa)) folds into the 3'-5' exonuclease domain. An HRDC domain is found at 213 to 294 (SGRVVAIAQQ…ARGMSVPNSE (82 aa)).

Belongs to the RNase D family. It depends on a divalent metal cation as a cofactor.

The protein resides in the cytoplasm. It carries out the reaction Exonucleolytic cleavage that removes extra residues from the 3'-terminus of tRNA to produce 5'-mononucleotides.. In terms of biological role, exonuclease involved in the 3' processing of various precursor tRNAs. Initiates hydrolysis at the 3'-terminus of an RNA molecule and releases 5'-mononucleotides. The protein is Ribonuclease D of Jannaschia sp. (strain CCS1).